The chain runs to 319 residues: Ferrochelatase (319 aa).

Positions 194 and 275 each coordinate Fe cation.

It belongs to the ferrochelatase family.

Its subcellular location is the cytoplasm. The enzyme catalyses heme b + 2 H(+) = protoporphyrin IX + Fe(2+). The protein operates within porphyrin-containing compound metabolism; protoheme biosynthesis; protoheme from protoporphyrin-IX: step 1/1. Catalyzes the ferrous insertion into protoporphyrin IX. The protein is Ferrochelatase of Vibrio vulnificus (strain CMCP6).